Reading from the N-terminus, the 379-residue chain is Chaperone protein DnaJ (379 aa).

In terms of domain architecture, J spans 7–72 (CYYETLEVER…DKRAAYDRYG (66 aa)). Residues 135 to 213 (GKTAQIEIPV…CTGSGRVTKE (79 aa)) form a CR-type zinc finger. The Zn(2+) site is built by cysteine 148, cysteine 151, cysteine 165, cysteine 168, cysteine 187, cysteine 190, cysteine 201, and cysteine 204. CXXCXGXG motif repeat units lie at residues 148–155 (CEACSGTG), 165–172 (CSTCGGAG), 187–194 (CPSCQGRG), and 201–208 (CPSCTGSG).

It belongs to the DnaJ family. As to quaternary structure, homodimer. Zn(2+) is required as a cofactor.

It localises to the cytoplasm. Functionally, participates actively in the response to hyperosmotic and heat shock by preventing the aggregation of stress-denatured proteins and by disaggregating proteins, also in an autonomous, DnaK-independent fashion. Unfolded proteins bind initially to DnaJ; upon interaction with the DnaJ-bound protein, DnaK hydrolyzes its bound ATP, resulting in the formation of a stable complex. GrpE releases ADP from DnaK; ATP binding to DnaK triggers the release of the substrate protein, thus completing the reaction cycle. Several rounds of ATP-dependent interactions between DnaJ, DnaK and GrpE are required for fully efficient folding. Also involved, together with DnaK and GrpE, in the DNA replication of plasmids through activation of initiation proteins. The protein is Chaperone protein DnaJ of Rhodopseudomonas palustris (strain ATCC BAA-98 / CGA009).